A 445-amino-acid chain; its full sequence is Chromosome partition protein MukF (445 aa).

Residues 212–240 are leucine-zipper; that stretch reads LDETSGNLRELQDTLNAAGDKLQEQLLRI.

It belongs to the MukF family. As to quaternary structure, interacts, and probably forms a ternary complex, with MukE and MukB via its C-terminal region. The complex formation is stimulated by calcium or magnesium. It is required for an interaction between MukE and MukB.

It localises to the cytoplasm. The protein localises to the nucleoid. Involved in chromosome condensation, segregation and cell cycle progression. May participate in facilitating chromosome segregation by condensation DNA from both sides of a centrally located replisome during cell division. Not required for mini-F plasmid partitioning. Probably acts via its interaction with MukB and MukE. Overexpression results in anucleate cells. It has a calcium binding activity. The sequence is that of Chromosome partition protein MukF from Mannheimia succiniciproducens (strain KCTC 0769BP / MBEL55E).